A 321-amino-acid chain; its full sequence is Beta-ketoacyl-[acyl-carrier-protein] synthase III (321 aa).

Catalysis depends on residues cysteine 116 and histidine 248. The segment at 249–253 (QANLR) is ACP-binding. Residue asparagine 278 is part of the active site.

This sequence belongs to the thiolase-like superfamily. FabH family. As to quaternary structure, homodimer.

It localises to the cytoplasm. The enzyme catalyses malonyl-[ACP] + acetyl-CoA + H(+) = 3-oxobutanoyl-[ACP] + CO2 + CoA. It participates in lipid metabolism; fatty acid biosynthesis. Its function is as follows. Catalyzes the condensation reaction of fatty acid synthesis by the addition to an acyl acceptor of two carbons from malonyl-ACP. Catalyzes the first condensation reaction which initiates fatty acid synthesis and may therefore play a role in governing the total rate of fatty acid production. Possesses both acetoacetyl-ACP synthase and acetyl transacylase activities. Its substrate specificity determines the biosynthesis of branched-chain and/or straight-chain of fatty acids. The polypeptide is Beta-ketoacyl-[acyl-carrier-protein] synthase III (Yersinia enterocolitica serotype O:8 / biotype 1B (strain NCTC 13174 / 8081)).